Consider the following 767-residue polypeptide: 5-methyltetrahydropteroyltriglutamate--homocysteine methyltransferase (767 aa).

5-methyltetrahydropteroyltri-L-glutamate is bound by residues lysine 19 and asparagine 126. L-homocysteine-binding positions include 446-448 (IGS) and glutamate 499. L-methionine-binding positions include 446-448 (IGS) and glutamate 499. 5-methyltetrahydropteroyltri-L-glutamate contacts are provided by residues aspartate 504, tyrosine 527, 530–531 (RY), and tryptophan 576. L-homocysteine is bound at residue aspartate 614. Aspartate 614 is a binding site for L-methionine. Zn(2+) is bound by residues histidine 657, cysteine 659, and glutamate 679. Histidine 707 functions as the Proton donor in the catalytic mechanism. Cysteine 739 is a Zn(2+) binding site.

This sequence belongs to the vitamin-B12 independent methionine synthase family. The cofactor is Zn(2+).

It catalyses the reaction 5-methyltetrahydropteroyltri-L-glutamate + L-homocysteine = tetrahydropteroyltri-L-glutamate + L-methionine. The protein operates within amino-acid biosynthesis; L-methionine biosynthesis via de novo pathway; L-methionine from L-homocysteine (MetE route): step 1/1. Inhibited weakly by methotrexate. Functionally, catalyzes the transfer of a methyl group from 5-methyltetrahydrofolate to homocysteine resulting in methionine formation. This Candida albicans (strain SC5314 / ATCC MYA-2876) (Yeast) protein is 5-methyltetrahydropteroyltriglutamate--homocysteine methyltransferase.